A 156-amino-acid polypeptide reads, in one-letter code: Transcriptional repressor NrdR (156 aa).

The segment at 3–34 (CPYCRHPDSRVVDSREAEEGAAIRRRRSCPNC) is a zinc-finger region. The ATP-cone domain occupies 46–136 (LSVVKRSGVT…VYRSFTSAED (91 aa)).

The protein belongs to the NrdR family. Zn(2+) is required as a cofactor.

Its function is as follows. Negatively regulates transcription of bacterial ribonucleotide reductase nrd genes and operons by binding to NrdR-boxes. This chain is Transcriptional repressor NrdR, found in Nocardia farcinica (strain IFM 10152).